Consider the following 124-residue polypeptide: Histone H2B, embryonic (124 aa).

A disordered region spans residues 1-31 (MAPTAQVAKKGSKKAVKGTKTAXGGKKRNRK). A glycan (O-linked (GlcNAc) serine) is linked at Ser111. Lys119 is covalently cross-linked (Glycyl lysine isopeptide (Lys-Gly) (interchain with G-Cter in ubiquitin)).

This sequence belongs to the histone H2B family. In terms of assembly, the nucleosome is a histone octamer containing two molecules each of H2A, H2B, H3 and H4 assembled in one H3-H4 heterotetramer and two H2A-H2B heterodimers. The octamer wraps approximately 147 bp of DNA. Monoubiquitination of Lys-119 gives a specific tag for epigenetic transcriptional activation and is also prerequisite for histone H3 'Lys-4' and 'Lys-79' methylation. In terms of processing, glcNAcylation at Ser-111 promotes monoubiquitination of Lys-119. It fluctuates in response to extracellular glucose, and associates with transcribed genes.

The protein localises to the nucleus. The protein resides in the chromosome. Its function is as follows. Core component of nucleosome. Nucleosomes wrap and compact DNA into chromatin, limiting DNA accessibility to the cellular machineries which require DNA as a template. Histones thereby play a central role in transcription regulation, DNA repair, DNA replication and chromosomal stability. DNA accessibility is regulated via a complex set of post-translational modifications of histones, also called histone code, and nucleosome remodeling. This Strongylocentrotus purpuratus (Purple sea urchin) protein is Histone H2B, embryonic.